A 132-amino-acid polypeptide reads, in one-letter code: Ribosome-binding factor A (132 aa).

This sequence belongs to the RbfA family. As to quaternary structure, monomer. Binds 30S ribosomal subunits, but not 50S ribosomal subunits or 70S ribosomes.

The protein resides in the cytoplasm. One of several proteins that assist in the late maturation steps of the functional core of the 30S ribosomal subunit. Associates with free 30S ribosomal subunits (but not with 30S subunits that are part of 70S ribosomes or polysomes). Required for efficient processing of 16S rRNA. May interact with the 5'-terminal helix region of 16S rRNA. The chain is Ribosome-binding factor A from Pectobacterium atrosepticum (strain SCRI 1043 / ATCC BAA-672) (Erwinia carotovora subsp. atroseptica).